We begin with the raw amino-acid sequence, 331 residues long: Biotin synthase (331 aa).

A Radical SAM core domain is found at 53 to 271 (TELQLSQLLS…IAVARIVCPK (219 aa)). 3 residues coordinate [4Fe-4S] cluster: Cys68, Cys72, and Cys75. Residues Cys112, Cys143, Cys203, and Arg275 each contribute to the [2Fe-2S] cluster site.

The protein belongs to the radical SAM superfamily. Biotin synthase family. As to quaternary structure, homodimer. Requires [4Fe-4S] cluster as cofactor. The cofactor is [2Fe-2S] cluster.

It catalyses the reaction (4R,5S)-dethiobiotin + (sulfur carrier)-SH + 2 reduced [2Fe-2S]-[ferredoxin] + 2 S-adenosyl-L-methionine = (sulfur carrier)-H + biotin + 2 5'-deoxyadenosine + 2 L-methionine + 2 oxidized [2Fe-2S]-[ferredoxin]. It participates in cofactor biosynthesis; biotin biosynthesis; biotin from 7,8-diaminononanoate: step 2/2. Its function is as follows. Catalyzes the conversion of dethiobiotin (DTB) to biotin by the insertion of a sulfur atom into dethiobiotin via a radical-based mechanism. The polypeptide is Biotin synthase (Phenylobacterium zucineum (strain HLK1)).